The sequence spans 489 residues: MRVAIVGAGLAGMATAVELVDAGHEVELYEARSFIGGKVGSWVDGDGNHIEMGLHVFFGCYYNLFNLMEKVGAKQNLRLKEHTHTFVNQGGRIGELDFRFLTGAPFNGLKAFFTTSQLDTKDKIANSIALATSPIVRGLVDFDGAMKTIRDLDRISFAEWFLSKGGNEGSLKKMWDPIAYALGFIDTENISARCMLTIFQLFAARTEASVLRMLEGSPQEYLHKPIQEYLEQRGTKFYTRHKVKEIKTKVTDGETRVTGLIINDGVETKTVTADAYVAACDVPGIKNLLPENWRTQWDFFNKIYYLDTVPVATVQLRFDGWVTEMNDPAKRKQLEQAFGLDNLLYTSDAEFSCFADLALTSPADYYRPGEGSLLQLVLTPGDPFMKESNEAIAYRVLKQVKALFPSAADLNMTWYSVIKLAQSLYREAPGMDLFRPSQATPIANFFLAGSYTQQDYIDSMEGATLSGRQAAQAILANQARLQTAVLASQ.

Belongs to the zeta carotene desaturase family. It depends on NAD(+) as a cofactor. The cofactor is NADP(+). FAD serves as cofactor.

The enzyme catalyses 9,9'-di-cis-zeta-carotene + 2 a quinone = 7,7',9,9'-tetra-cis-lycopene + 2 a quinol. It functions in the pathway carotenoid biosynthesis; lycopene biosynthesis. Functionally, catalyzes the conversion of zeta-carotene to lycopene via the intermediary of neurosporene. It carries out two consecutive desaturations (introduction of double bonds) at positions C-7 and C-7'. This is Zeta-carotene desaturase (crtQ) from Synechocystis sp. (strain ATCC 27184 / PCC 6803 / Kazusa).